Here is a 148-residue protein sequence, read N- to C-terminus: Single-stranded DNA-binding protein, mitochondrial (148 aa).

The transit peptide at 1–16 (MFRRPALQVLRQFVRH) directs the protein to the mitochondrion. An SSB domain is found at 30 to 141 (LNRVQLLGRV…IIADNIVFLS (112 aa)). Residues Ser-67 and Ser-79 each carry the phosphoserine modification. N6-acetyllysine is present on Lys-113. Lys-122 carries the post-translational modification N6-succinyllysine.

In terms of assembly, homotetramer. Interacts with MPG/AAG, through inhibition of its glycosylase activity it potentially prevents formation of DNA breaks in ssDNA, ensuring that base removal primarily occurs in dsDNA. Interacts with POLDIP2. Interacts with PRIMPOL.

It localises to the mitochondrion. It is found in the mitochondrion matrix. The protein resides in the mitochondrion nucleoid. In terms of biological role, binds preferentially and cooperatively to pyrimidine rich single-stranded DNA (ss-DNA). In vitro, required to maintain the copy number of mitochondrial DNA (mtDNA) and plays a crucial role during mtDNA replication by stimulating the activity of the replisome components POLG and TWNK at the replication fork. Promotes the activity of the gamma complex polymerase POLG, largely by organizing the template DNA and eliminating secondary structures to favor ss-DNA conformations that facilitate POLG activity. In addition it is able to promote the 5'-3' unwinding activity of the mtDNA helicase TWNK. May also function in mtDNA repair. The polypeptide is Single-stranded DNA-binding protein, mitochondrial (SSBP1) (Oryctolagus cuniculus (Rabbit)).